The primary structure comprises 283 residues: Putative sugar uptake protein BC_0219 (283 aa).

10 helical membrane-spanning segments follow: residues 4-21 (LLALLPAIAWGNILLVSV), 26-48 (GAYSQTVGMTIGALFFATIMYVF), 52-71 (ALTMTILIVGFISGLFWALG), 84-106 (VSTTVTISTGMQLVATSIFGVIA), 110-132 (WTTTTTIILGTIAILLIVVGVVF), 151-173 (LLTLIVSTFGYLVYVIIIRWYNI), 178-195 (AILPQAVGMFVGAVVLTS), 208-230 (ALSGLLWGTGNLFLLLSLPRVGV), 234-253 (FPLSQTGIVISTFGAIVFLG), and 260-279 (QLIFIALGSVLIIGGAVLLG).

It belongs to the GRP transporter (TC 2.A.7.5) family.

Its subcellular location is the cell membrane. In Bacillus cereus (strain ATCC 14579 / DSM 31 / CCUG 7414 / JCM 2152 / NBRC 15305 / NCIMB 9373 / NCTC 2599 / NRRL B-3711), this protein is Putative sugar uptake protein BC_0219.